A 493-amino-acid chain; its full sequence is Guanosine-5'-triphosphate,3'-diphosphate pyrophosphatase (493 aa).

Belongs to the GppA/Ppx family. GppA subfamily.

It carries out the reaction guanosine 3'-diphosphate 5'-triphosphate + H2O = guanosine 3',5'-bis(diphosphate) + phosphate + H(+). Its pathway is purine metabolism; ppGpp biosynthesis; ppGpp from GTP: step 2/2. Catalyzes the conversion of pppGpp to ppGpp. Guanosine pentaphosphate (pppGpp) is a cytoplasmic signaling molecule which together with ppGpp controls the 'stringent response', an adaptive process that allows bacteria to respond to amino acid starvation, resulting in the coordinated regulation of numerous cellular activities. This Salmonella agona (strain SL483) protein is Guanosine-5'-triphosphate,3'-diphosphate pyrophosphatase.